Consider the following 220-residue polypeptide: Deoxyribose-phosphate aldolase (220 aa).

The active-site Proton donor/acceptor is Asp89. The active-site Schiff-base intermediate with acetaldehyde is Lys151. Lys180 functions as the Proton donor/acceptor in the catalytic mechanism.

This sequence belongs to the DeoC/FbaB aldolase family. DeoC type 1 subfamily.

The protein resides in the cytoplasm. The catalysed reaction is 2-deoxy-D-ribose 5-phosphate = D-glyceraldehyde 3-phosphate + acetaldehyde. The protein operates within carbohydrate degradation; 2-deoxy-D-ribose 1-phosphate degradation; D-glyceraldehyde 3-phosphate and acetaldehyde from 2-deoxy-alpha-D-ribose 1-phosphate: step 2/2. Its function is as follows. Catalyzes a reversible aldol reaction between acetaldehyde and D-glyceraldehyde 3-phosphate to generate 2-deoxy-D-ribose 5-phosphate. This Streptococcus suis (strain 05ZYH33) protein is Deoxyribose-phosphate aldolase.